A 552-amino-acid chain; its full sequence is Steroid transmembrane transporter SLC22A24 (552 aa).

The next 12 membrane-spanning stretches (helical) occupy residues 16-36 (FQIC…PNIV), 146-166 (SMVQ…YGHL), 178-200 (LCFL…LVYC), 204-226 (FLAG…EWTL), 234-254 (IMVL…LAFA), 260-280 (ILQL…WKMV), 350-370 (VFGL…LILN), 380-400 (LFQI…LLTL), 407-427 (ISQI…TFLP), 435-455 (VVLA…ASVH), 474-492 (VSGR…LMAY), and 496-516 (LPWI…LLLP).

It belongs to the major facilitator (TC 2.A.1) superfamily. Organic cation transporter (TC 2.A.1.19) family. In terms of tissue distribution, localized to the kidney. Highly specific expression pattern in the nephron, localized to segment 3 of the proximal tubule.

Its subcellular location is the cell membrane. The catalysed reaction is estrone 3-sulfate(out) + glutarate(in) = estrone 3-sulfate(in) + glutarate(out). The enzyme catalyses 17beta-estradiol 17-O-(beta-D-glucuronate)(out) + glutarate(in) = 17beta-estradiol 17-O-(beta-D-glucuronate)(in) + glutarate(out). It catalyses the reaction taurocholate(out) + glutarate(in) = taurocholate(in) + glutarate(out). It carries out the reaction 5alpha-androstane-3alpha,17beta-diol 3-O-(beta-D-glucuronate)(out) + glutarate(in) = 5alpha-androstane-3alpha,17beta-diol 3-O-(beta-D-glucuronate)(in) + glutarate(out). The catalysed reaction is glycocholate(out) + glutarate(in) = glycocholate(in) + glutarate(out). The enzyme catalyses dehydroepiandrosterone 3-sulfate(out) + glutarate(in) = dehydroepiandrosterone 3-sulfate(in) + glutarate(out). It catalyses the reaction glutarate(in) + succinate(out) = glutarate(out) + succinate(in). Its activity is regulated as follows. Transport is chloride sensitive and transtimulated by glutaric acid. Transport is inhibited by anionic compounds from different chemical classes. Renal transmembrane organic anion/dicarboxylate exchanger that participates in the reabsorption of conjugated steroids including estradiol-17beta-D-glucuronide (or 17beta-estradiol 17-O-(beta-D-glucuronate)), androstanediol glucuronide (or 5alpha-androstane-3alpha,17beta-diol 3-O-(beta-D-glucuronate)), and estrone 3-sulfate, as well as bile acids taurocholate and glycocholate, driven by an outward gradient of dicarboxylates such as glutarate or succinate. Its function is as follows. Similar uptake function as Isoform 1. In terms of biological role, lack of transporter activity. In Homo sapiens (Human), this protein is Steroid transmembrane transporter SLC22A24.